We begin with the raw amino-acid sequence, 509 residues long: Cytochrome P450 monooxygenase fumoA (509 aa).

A helical membrane pass occupies residues leucine 5–phenylalanine 27. N-linked (GlcNAc...) asparagine glycans are attached at residues asparagine 317, asparagine 369, and asparagine 378. Cysteine 456 lines the heme pocket. Asparagine 464 carries an N-linked (GlcNAc...) asparagine glycan.

The protein belongs to the cytochrome P450 family. The cofactor is heme.

The protein resides in the membrane. It functions in the pathway secondary metabolite biosynthesis. Its function is as follows. Cytochrome P450 monooxygenase; part of the gene cluster that mediates the biosynthesis of fumosorinone, a 2-pyridone alkaloid that acts as an inhibitor of protein tyrosine phosphatase 1B which is implicated asa negative regulator of insulin receptor signaling and a potential drug target for the treatment of type II diabetes and other associated metabolic syndromes. The polyketide-amino acid backbone of fumosorinone is first assembled by the PKS-NRPS hybrid fumoS. The PKS modules condense one acetyl-CoA starter unit with 7 malonyl-CoA units, programmed C-methylations occurring after the first 3 and the sixth extensions, and cycles of full reduction occurring after the first 2 extensions. Because fumoS lacks a designated enoyl reductase (ER) domain, the required activity is provided the enoyl reductase fumoC. Upon formation of the polyketide backbone on the thiotemplate, the polyketide is transferred to the NRPS module and linked to tyrosine to produce the acyltetramic acid intermediate called prefumosorinone A. The cytochrome P450 monooxygenase fumoA then probably catalyzes an unprecedented oxidative ring expansion of prefumosorinone A to form prefumosorinone B which contains the 2-pyridone core of fumosorinone. The cytochrome P450 monooxygenase fumoB might hydroxylate the nitrogen of prefumosorinone B, but not the acyltetramic acid prefumosorinone A, to form fumosorinone. This chain is Cytochrome P450 monooxygenase fumoA, found in Cordyceps fumosorosea (strain ARSEF 2679) (Isaria fumosorosea).